A 329-amino-acid polypeptide reads, in one-letter code: Replication factor C small subunit 1 (329 aa).

Position 44 to 51 (Gly-44 to Thr-51) interacts with ATP.

Belongs to the activator 1 small subunits family. RfcS subfamily. In terms of assembly, heteromultimer composed of small subunits (RfcS) and large subunits (RfcL).

Its function is as follows. Part of the RFC clamp loader complex which loads the PCNA sliding clamp onto DNA. The protein is Replication factor C small subunit 1 of Pyrobaculum islandicum (strain DSM 4184 / JCM 9189 / GEO3).